A 293-amino-acid polypeptide reads, in one-letter code: Ribosomal protein L11 methyltransferase (293 aa).

Residues Thr145, Gly166, Asp188, and Asn229 each contribute to the S-adenosyl-L-methionine site.

This sequence belongs to the methyltransferase superfamily. PrmA family.

It localises to the cytoplasm. It carries out the reaction L-lysyl-[protein] + 3 S-adenosyl-L-methionine = N(6),N(6),N(6)-trimethyl-L-lysyl-[protein] + 3 S-adenosyl-L-homocysteine + 3 H(+). Its function is as follows. Methylates ribosomal protein L11. This chain is Ribosomal protein L11 methyltransferase, found in Halorhodospira halophila (strain DSM 244 / SL1) (Ectothiorhodospira halophila (strain DSM 244 / SL1)).